A 370-amino-acid chain; its full sequence is Cytochrome b (370 aa).

4 helical membrane passes run 25-45 (FGSM…FLAV), 69-90 (WLMQ…YIHI), 105-125 (WLSG…GYVL), and 170-190 (FFAL…LHIL). Residues histidine 75 and histidine 89 each contribute to the heme b site. Histidine 174 and histidine 188 together coordinate heme b. Histidine 193 contacts a ubiquinone. The next 4 membrane-spanning stretches (helical) occupy residues 218 to 238 (YKDL…VSFF), 280 to 300 (LGGA…PFTH), 312 to 332 (LMQL…WSST), and 339 to 358 (FTTI…ISKP).

The protein belongs to the cytochrome b family. In terms of assembly, the cytochrome bc1 complex contains 3 respiratory subunits (MT-CYB, CYC1 and UQCRFS1), 2 core proteins (UQCRC1 and UQCRC2) and probably 6 low-molecular weight proteins. It depends on heme b as a cofactor.

It localises to the mitochondrion inner membrane. Component of the ubiquinol-cytochrome c reductase complex (complex III or cytochrome b-c1 complex) that is part of the mitochondrial respiratory chain. The b-c1 complex mediates electron transfer from ubiquinol to cytochrome c. Contributes to the generation of a proton gradient across the mitochondrial membrane that is then used for ATP synthesis. This is Cytochrome b (MT-CYB) from Chilabothrus subflavus (Jamaican yellow boa).